The chain runs to 1285 residues: ABC-type transporter fsqE (1285 aa).

The ABC transmembrane type-1 1 domain occupies 54 to 343 (VSSICAVLAG…IAPSAQALLS (290 aa)). 6 consecutive transmembrane segments (helical) span residues 57–77 (ICAV…GLLV), 102–122 (LYYV…TVGF), 176–196 (LAVM…AFIM), 203–223 (IISP…AYMV), 281–301 (VAGM…LAFW), and 312–332 (MSVA…FAII). The region spanning 380-622 (LDRVGLIYPS…NGAYAALVQK (243 aa)) is the ABC transporter 1 domain. 413–420 (GSSGSGKS) serves as a coordination point for ATP. A glycan (N-linked (GlcNAc...) asparagine) is linked at asparagine 467. The interval 627–654 (DTHDHKAPDGARLSIEDDDDEDSRYGGN) is disordered. The next 6 membrane-spanning stretches (helical) occupy residues 707–727 (LFGL…SVFF), 753–773 (GLYV…EIAL), 831–851 (GILT…AIGW), 855–875 (LVCT…LQVL), 931–951 (ILLA…CAAL), and 968–988 (FQVY…GSIF). In terms of domain architecture, ABC transmembrane type-1 2 spans 713–996 (AILAGLTIPV…IFTYAPDASK (284 aa)). Asparagine 1037 is a glycosylation site (N-linked (GlcNAc...) asparagine). The 239-residue stretch at 1043–1281 (VEFEHVSFTY…RGKYWEMVSM (239 aa)) folds into the ABC transporter 2 domain. 1078–1085 (GQSGSGKS) serves as a coordination point for ATP. A glycan (N-linked (GlcNAc...) asparagine) is linked at asparagine 1138.

This sequence belongs to the ABC transporter superfamily. ABCB family. Multidrug resistance exporter (TC 3.A.1.201) subfamily.

The protein localises to the membrane. The protein operates within secondary metabolite biosynthesis. Its function is as follows. ABC-type transporter; part of the gene cluster that mediates the biosynthesis of the isoquinoline alkaloids fumisoquin A, fumisoquin B and fumisoquin C; as well as small amounts of fumipyrrole as a shunt metabolite. The products of the cluster lead to a brown coloration and are important for growth and conidiation. FsqE possibly plays a role of self-protection. The protein is ABC-type transporter fsqE of Aspergillus fumigatus (strain ATCC MYA-4609 / CBS 101355 / FGSC A1100 / Af293) (Neosartorya fumigata).